Consider the following 146-residue polypeptide: VHLSGEEKGAVTALWGKVNQEEVGGEALGRLLVVYPWTQRFFDSFGDLSSASAVMGNAKVKAHGKKVLNSFSDGLKNLDNLKGAFAKLSELHCDKLHVDPENFKLLGNVLVVVLARTFGKEFTPPVQSAFQKVAAGVATALAHKYH.

Val-1 bears the N-acetylvaline mark. The 145-residue stretch at 2–146 (HLSGEEKGAV…VATALAHKYH (145 aa)) folds into the Globin domain. Thr-12 bears the Phosphothreonine mark. Position 44 is a phosphoserine (Ser-44). Position 59 is an N6-acetyllysine (Lys-59). His-63 contributes to the heme b binding site. Lys-82 carries the post-translational modification N6-acetyllysine. Position 92 (His-92) interacts with heme b. Residue Cys-93 is modified to S-nitrosocysteine. Lys-144 is modified (N6-acetyllysine).

The protein belongs to the globin family. As to quaternary structure, heterotetramer of two alpha chains and two beta chains. In terms of tissue distribution, red blood cells.

Involved in oxygen transport from the lung to the various peripheral tissues. The protein is Hemoglobin subunit beta (HBB) of Tadarida brasiliensis (Brazilian free-tailed bat).